The following is a 1298-amino-acid chain: Phosphoribosylformylglycinamidine synthase (1298 aa).

Residues 303–327 (FPGAATGSGGEIRDEGATGRGAKPK) are disordered. ATP is bound by residues 305–316 (GAATGSGGEIRD), 384–386 (TGY), and Ala676. Mg(2+) contacts are provided by Asp677, Glu716, Asn720, and Asp884. Ser886 contributes to the ATP binding site. A Glutamine amidotransferase type-1 domain is found at 1045–1298 (VAVLREQGVN…MFRNARAWVN (254 aa)). Cys1138 serves as the catalytic Nucleophile. Residues His1263 and Glu1265 contribute to the active site.

The protein in the N-terminal section; belongs to the FGAMS family. As to quaternary structure, monomer.

The protein localises to the cytoplasm. It catalyses the reaction N(2)-formyl-N(1)-(5-phospho-beta-D-ribosyl)glycinamide + L-glutamine + ATP + H2O = 2-formamido-N(1)-(5-O-phospho-beta-D-ribosyl)acetamidine + L-glutamate + ADP + phosphate + H(+). It functions in the pathway purine metabolism; IMP biosynthesis via de novo pathway; 5-amino-1-(5-phospho-D-ribosyl)imidazole from N(2)-formyl-N(1)-(5-phospho-D-ribosyl)glycinamide: step 1/2. Phosphoribosylformylglycinamidine synthase involved in the purines biosynthetic pathway. Catalyzes the ATP-dependent conversion of formylglycinamide ribonucleotide (FGAR) and glutamine to yield formylglycinamidine ribonucleotide (FGAM) and glutamate. The polypeptide is Phosphoribosylformylglycinamidine synthase (Pseudomonas savastanoi pv. phaseolicola (strain 1448A / Race 6) (Pseudomonas syringae pv. phaseolicola (strain 1448A / Race 6))).